We begin with the raw amino-acid sequence, 385 residues long: GDP-mannose-dependent alpha-(1-6)-phosphatidylinositol monomannoside mannosyltransferase (385 aa).

GDP-alpha-D-mannose-binding residues include arginine 205, lysine 210, valine 262, and glutamate 299.

It belongs to the glycosyltransferase group 1 family. Glycosyltransferase 4 subfamily.

It catalyses the reaction a 1,2-diacyl-sn-glycero-3-phospho-[alpha-D-mannopyranosyl-(1&lt;-&gt;6)-D-myo-inositol] + GDP-alpha-D-mannose = a 2,6-O-bis(alpha-D-mannopyranosyl)-1-phosphatidyl-1D-myo-inositol + GDP + H(+). The enzyme catalyses a 1,2-diacyl-sn-glycero-3-phospho-[alpha-D-6-acyl-mannopyranosyl-(1&lt;-&gt;6)-D-myo-inositol] + GDP-alpha-D-mannose = a 2-O-(alpha-D-mannosyl)-6-O-(6-O-acyl-alpha-D-mannosyl)-1-phosphatidyl-1D-myo-inositol + GDP + H(+). The protein operates within phospholipid metabolism; phosphatidylinositol metabolism. Functionally, involved in the biosynthesis of phosphatidyl-myo-inositol mannosides (PIM) which are early precursors in the biosynthesis of lipomannans (LM) and lipoarabinomannans (LAM). Catalyzes the addition of a mannosyl residue from GDP-D-mannose (GDP-Man) to the position 6 of a phosphatidyl-myo-inositol bearing an alpha-1,2-linked mannose residue (PIM1) to generate phosphatidyl-myo-inositol bearing alpha-1,2- and alpha-1,6-linked mannose residues (Ac1PIM2). PimB also catalyzes the addition of a mannosyl residue from GDP-Man to the position 6 of phosphatidyl-myo-inositol bearing an acylated alpha-1,2-linked mannose residue (Ac1PIM1) to generate monoacylated phosphatidyl-myo-inositol bearing alpha-1,2- and alpha-1,6-linked mannose residues (Ac1PIM2). The addition of the second mannosyl residue by PimB preferentially occurs before the acylation of the mannosyl residue transferred by PimA. Also able to transfer a mannosyl residue from GDP-Man to the position 6 of a phosphatidyl-myo-inositol (PI), but this reaction is very slow. The polypeptide is GDP-mannose-dependent alpha-(1-6)-phosphatidylinositol monomannoside mannosyltransferase (Mycobacterium tuberculosis (strain CDC 1551 / Oshkosh)).